The following is a 505-amino-acid chain: ATP synthase subunit alpha (505 aa).

Residue 170–177 (GDRQTGKT) participates in ATP binding.

The protein belongs to the ATPase alpha/beta chains family. F-type ATPases have 2 components, CF(1) - the catalytic core - and CF(0) - the membrane proton channel. CF(1) has five subunits: alpha(3), beta(3), gamma(1), delta(1), epsilon(1). CF(0) has four main subunits: a(1), b(1), b'(1) and c(9-12).

The protein localises to the cellular thylakoid membrane. The enzyme catalyses ATP + H2O + 4 H(+)(in) = ADP + phosphate + 5 H(+)(out). Its function is as follows. Produces ATP from ADP in the presence of a proton gradient across the membrane. The alpha chain is a regulatory subunit. The chain is ATP synthase subunit alpha from Trichodesmium erythraeum (strain IMS101).